Here is a 415-residue protein sequence, read N- to C-terminus: Adenosylhomocysteinase (415 aa).

Substrate contacts are provided by Thr-53, Asp-124, and Glu-147. 148–150 (TTT) provides a ligand contact to NAD(+). Positions 177 and 181 each coordinate substrate. Residues Asn-182, 211-216 (GYGWVG), Glu-234, Asn-269, 290-292 (SGH), and Asn-337 each bind NAD(+).

Belongs to the adenosylhomocysteinase family. NAD(+) is required as a cofactor.

The protein resides in the cytoplasm. The enzyme catalyses S-adenosyl-L-homocysteine + H2O = L-homocysteine + adenosine. Its pathway is amino-acid biosynthesis; L-homocysteine biosynthesis; L-homocysteine from S-adenosyl-L-homocysteine: step 1/1. May play a key role in the regulation of the intracellular concentration of adenosylhomocysteine. This Sulfurisphaera tokodaii (strain DSM 16993 / JCM 10545 / NBRC 100140 / 7) (Sulfolobus tokodaii) protein is Adenosylhomocysteinase.